Here is a 469-residue protein sequence, read N- to C-terminus: Sulfate adenylyltransferase subunit 1 (469 aa).

One can recognise a tr-type G domain in the interval 22 to 238; sequence KQLLRFITCG…LETIKIDEDR (217 aa). Positions 31 to 38 are G1; it reads GSVDDGKS. 31-38 lines the GTP pocket; the sequence is GSVDDGKS. The tract at residues 89-93 is G2; sequence GITID. Residues 110-113 form a G3 region; that stretch reads DTPG. Residues 110-114 and 165-168 each bind GTP; these read DTPGH and NKMD. Residues 165–168 form a G4 region; that stretch reads NKMD. The tract at residues 203-205 is G5; that stretch reads SAL.

This sequence belongs to the TRAFAC class translation factor GTPase superfamily. Classic translation factor GTPase family. CysN/NodQ subfamily. In terms of assembly, heterodimer composed of CysD, the smaller subunit, and CysN.

The catalysed reaction is sulfate + ATP + H(+) = adenosine 5'-phosphosulfate + diphosphate. The protein operates within sulfur metabolism; hydrogen sulfide biosynthesis; sulfite from sulfate: step 1/3. With CysD forms the ATP sulfurylase (ATPS) that catalyzes the adenylation of sulfate producing adenosine 5'-phosphosulfate (APS) and diphosphate, the first enzymatic step in sulfur assimilation pathway. APS synthesis involves the formation of a high-energy phosphoric-sulfuric acid anhydride bond driven by GTP hydrolysis by CysN coupled to ATP hydrolysis by CysD. The chain is Sulfate adenylyltransferase subunit 1 from Aliarcobacter butzleri (strain RM4018) (Arcobacter butzleri).